The chain runs to 206 residues: Urease accessory protein UreG (206 aa).

Gly-15–Thr-22 is a GTP binding site.

This sequence belongs to the SIMIBI class G3E GTPase family. UreG subfamily. In terms of assembly, homodimer. UreD, UreF and UreG form a complex that acts as a GTP-hydrolysis-dependent molecular chaperone, activating the urease apoprotein by helping to assemble the nickel containing metallocenter of UreC. The UreE protein probably delivers the nickel.

The protein resides in the cytoplasm. In terms of biological role, facilitates the functional incorporation of the urease nickel metallocenter. This process requires GTP hydrolysis, probably effectuated by UreG. This Ralstonia pickettii (strain 12J) protein is Urease accessory protein UreG.